A 342-amino-acid chain; its full sequence is MSITPQEALTRCIEHREIFHDEMLHLMRQIMQGQISPVMAAAILTGLRVKKETIGEISAAAQVMREFANHVTVKDRENFVDIVGTGGDGSHTFNISTASMFVAAAAGAKIAKHGNRGVSSKSGSADVLEALGVNIMLTPEQVGECIEQTGIGFMFAPTHHPAMKNVAPIRKEMGVRTIFNILGPLTNPADAPNILMGVFHPDLVGIQVRVMQRLGAQHAIVVYGKDGMDEVSLGAATLVGELKDGEVREYEIHPEDFGLSMISNRGLKVADAVESKEMLLEALSDVPGTPREIVSLNAGTALYAANVASSIEDGIRRAREAIASGAAREKLDQFVRATQQFK.

Residues Gly84, 87–88, Thr92, 94–97, 112–120, and Ser124 each bind 5-phospho-alpha-D-ribose 1-diphosphate; these read GD, NIST, and KHGNRGVSS. Gly84 contributes to the anthranilate binding site. Ser96 provides a ligand contact to Mg(2+). An anthranilate-binding site is contributed by Asn115. Arg170 contributes to the anthranilate binding site. The Mg(2+) site is built by Asp229 and Glu230.

The protein belongs to the anthranilate phosphoribosyltransferase family. In terms of assembly, homodimer. Requires Mg(2+) as cofactor.

The enzyme catalyses N-(5-phospho-beta-D-ribosyl)anthranilate + diphosphate = 5-phospho-alpha-D-ribose 1-diphosphate + anthranilate. Its pathway is amino-acid biosynthesis; L-tryptophan biosynthesis; L-tryptophan from chorismate: step 2/5. Its function is as follows. Catalyzes the transfer of the phosphoribosyl group of 5-phosphorylribose-1-pyrophosphate (PRPP) to anthranilate to yield N-(5'-phosphoribosyl)-anthranilate (PRA). The chain is Anthranilate phosphoribosyltransferase from Cupriavidus metallidurans (strain ATCC 43123 / DSM 2839 / NBRC 102507 / CH34) (Ralstonia metallidurans).